A 174-amino-acid chain; its full sequence is DTLLDTDGEVVRNNGGPYYIIPAFRGNGGGLTLTRVGSETCPRTVVQASSEHSDGLPVVISALPRSLFISTSWRVTIQFVEATCIPKPSFWHIPQDSELEGAVKVGASDERFPLEFRIERVSEDTYKLMHCSSTSDSCRDLGISIDEEGNRRLVVRDENPLLVRFKKANQDSEK.

Intrachain disulfides connect Cys41–Cys84 and Cys131–Cys138.

The protein belongs to the protease inhibitor I3 (leguminous Kunitz-type inhibitor) family.

Its subcellular location is the secreted. In terms of biological role, inhibits bovine trypsin and chymotrypsin, and human plasmin, plasma kallikrein and factor XIIa. This is Trypsin inhibitor BvTI from Bauhinia variegata (Purple orchid tree).